The following is a 107-amino-acid chain: U1-lycotoxin-Ls1x (107 aa).

The signal sequence occupies residues Met-1–Ser-20. Positions Glu-21–Arg-41 are excised as a propeptide. Cystine bridges form between Cys-44-Cys-59, Cys-51-Cys-68, Cys-58-Cys-86, and Cys-70-Cys-84.

It belongs to the neurotoxin 19 (CSTX) family. 04 (U1-Lctx) subfamily. As to expression, expressed by the venom gland.

The protein localises to the secreted. The polypeptide is U1-lycotoxin-Ls1x (Lycosa singoriensis (Wolf spider)).